The following is a 202-amino-acid chain: LexA repressor (202 aa).

Positions 28–48 (RAEIAAQLGFRSPNAAEEHLK) form a DNA-binding region, H-T-H motif. Active-site for autocatalytic cleavage activity residues include Ser119 and Lys156.

It belongs to the peptidase S24 family. Homodimer.

It carries out the reaction Hydrolysis of Ala-|-Gly bond in repressor LexA.. Functionally, represses a number of genes involved in the response to DNA damage (SOS response), including recA and lexA. Binds to the 16 bp palindromic sequence 5'-CTGTATATATATACAG-3'. In the presence of single-stranded DNA, RecA interacts with LexA causing an autocatalytic cleavage which disrupts the DNA-binding part of LexA, leading to derepression of the SOS regulon and eventually DNA repair. This is LexA repressor from Erwinia tasmaniensis (strain DSM 17950 / CFBP 7177 / CIP 109463 / NCPPB 4357 / Et1/99).